A 255-amino-acid chain; its full sequence is Thiazole synthase (255 aa).

Residue lysine 96 is the Schiff-base intermediate with DXP of the active site. 1-deoxy-D-xylulose 5-phosphate is bound by residues glycine 157, 183–184, and 205–206; these read AG and NT.

The protein belongs to the ThiG family. In terms of assembly, homotetramer. Forms heterodimers with either ThiH or ThiS.

Its subcellular location is the cytoplasm. It carries out the reaction [ThiS sulfur-carrier protein]-C-terminal-Gly-aminoethanethioate + 2-iminoacetate + 1-deoxy-D-xylulose 5-phosphate = [ThiS sulfur-carrier protein]-C-terminal Gly-Gly + 2-[(2R,5Z)-2-carboxy-4-methylthiazol-5(2H)-ylidene]ethyl phosphate + 2 H2O + H(+). It functions in the pathway cofactor biosynthesis; thiamine diphosphate biosynthesis. Functionally, catalyzes the rearrangement of 1-deoxy-D-xylulose 5-phosphate (DXP) to produce the thiazole phosphate moiety of thiamine. Sulfur is provided by the thiocarboxylate moiety of the carrier protein ThiS. In vitro, sulfur can be provided by H(2)S. The sequence is that of Thiazole synthase from Bacillus licheniformis (strain ATCC 14580 / DSM 13 / JCM 2505 / CCUG 7422 / NBRC 12200 / NCIMB 9375 / NCTC 10341 / NRRL NRS-1264 / Gibson 46).